The following is a 147-amino-acid chain: Large ribosomal subunit protein uL16 (147 aa).

The protein belongs to the universal ribosomal protein uL16 family. Part of the 50S ribosomal subunit.

Functionally, binds 23S rRNA and is also seen to make contacts with the A and possibly P site tRNAs. The protein is Large ribosomal subunit protein uL16 of Lactobacillus delbrueckii subsp. bulgaricus (strain ATCC 11842 / DSM 20081 / BCRC 10696 / JCM 1002 / NBRC 13953 / NCIMB 11778 / NCTC 12712 / WDCM 00102 / Lb 14).